Here is a 356-residue protein sequence, read N- to C-terminus: Phosphoribosyl pyrophosphate synthase-associated protein 1 (356 aa).

Residue M1 is modified to N-acetylmethionine. Residues S177 and S215 each carry the phosphoserine modification.

It belongs to the ribose-phosphate pyrophosphokinase family. In terms of assembly, binds to PRPS1 and PRPS2.

Its function is as follows. Seems to play a negative regulatory role in 5-phosphoribose 1-diphosphate synthesis. This chain is Phosphoribosyl pyrophosphate synthase-associated protein 1 (Prpsap1), found in Mus musculus (Mouse).